The chain runs to 272 residues: Soluble interferon gamma receptor OPG193 (272 aa).

Residues 1–13 (MRYIIILAVLFIN) form the signal peptide. N-linked (GlcNAc...) asparagine; by host glycans are attached at residues Asn42, Asn150, and Asn267.

It belongs to the type II cytokine receptor family. As to quaternary structure, homodimer. Interacts with host IFNG.

It localises to the secreted. In terms of biological role, counteracts the antiviral effects of host IFN-gamma. Acts as a soluble IFN-gamma receptor and thus inhibits the interaction between host IFN-gamma and its receptor. The polypeptide is Soluble interferon gamma receptor OPG193 (OPG193) (Bos taurus (Bovine)).